The sequence spans 525 residues: Nucleolar complex protein 4 homolog B (525 aa).

Over residues methionine 1–phenylalanine 10 the composition is skewed to basic residues. Residues methionine 1 to arginine 21 are disordered. The next 3 helical transmembrane spans lie at alanine 307–isoleucine 327, phenylalanine 358–alanine 378, and leucine 386–isoleucine 406.

This sequence belongs to the CBF/MAK21 family.

It localises to the nucleus membrane. The protein resides in the nucleus. The protein localises to the nucleolus. The sequence is that of Nucleolar complex protein 4 homolog B (noc4l-b) from Xenopus laevis (African clawed frog).